The following is a 236-amino-acid chain: Probable fimbrial chaperone EcpE (236 aa).

Positions 1 to 27 are cleaved as a signal peptide; it reads MFRRRGVTLTKALLTAVCMLAAPLTQA.

It belongs to the EcpB/EcpE family.

Its function is as follows. Part of the ecpRABCDE operon, which encodes the E.coli common pilus (ECP). ECP is found in both commensal and pathogenic strains and plays a dual role in early-stage biofilm development and host cell recognition. The chain is Probable fimbrial chaperone EcpE (ecpE) from Escherichia coli (strain K12).